A 542-amino-acid polypeptide reads, in one-letter code: MTRYVFITGGVVSSLGKGLASAALAALLQARGYRVRLRKLDPYLNVDPGTMSPTQHGEVFVTDDGAETDLDLGHYERFTGLPASRADNVTTGRIYLDIITKERRGDYLGATIQVIPHVTNAIKAFVLDGNDDYDFVLVEIGGTVGDIEGLPFFEAIRQIGQERPRGSVCYLHLTLLPYIPSAGELKTKPTQHSVKELRSIGIQPDILLCRCDRPIPQDERRKLGLFCNVRESAVIEARDVDTIYAVPLSYREAGLDREILAHFQMEPETEPKLDRWQNILERVRNPEGEVTIAIVGKYTGLKDAYKSLTEALTHGGIANNVRVNLEWIEAEVFEREDPAPFLEGLHGILVPGGFGQRGAEGKIRAARYARERNIPYFGICFGMQMAVIEAARSLAGIEGANSTEFGATAEPVVGLLTEWMRGNELERRAAESDLGGTMRLGAYKATLGADTKIAQMYGGTEISERHRHRYEVNMAYRACLEAKGLRFSGTSPDGLLPETVEHEGHPWFIGVQFHPELKSRPFEPHPLFKGFIAAAIDQSRLV.

Residues 1–265 (MTRYVFITGG…DREILAHFQM (265 aa)) are amidoligase domain. Serine 13 is a CTP binding site. Serine 13 lines the UTP pocket. ATP contacts are provided by residues 14–19 (SLGKGL) and aspartate 71. 2 residues coordinate Mg(2+): aspartate 71 and glutamate 139. Residues 146–148 (DIE), 186–191 (KTKPTQ), and lysine 222 each bind CTP. Residues 186–191 (KTKPTQ) and lysine 222 contribute to the UTP site. Residue 238-240 (RDV) participates in ATP binding. The region spanning 291 to 541 (TIAIVGKYTG…IAAAIDQSRL (251 aa)) is the Glutamine amidotransferase type-1 domain. Glycine 353 contributes to the L-glutamine binding site. Cysteine 380 acts as the Nucleophile; for glutamine hydrolysis in catalysis. Residues 381-384 (FGMQ), glutamate 404, and arginine 469 contribute to the L-glutamine site. Residues histidine 514 and glutamate 516 contribute to the active site.

Belongs to the CTP synthase family. As to quaternary structure, homotetramer.

It carries out the reaction UTP + L-glutamine + ATP + H2O = CTP + L-glutamate + ADP + phosphate + 2 H(+). The catalysed reaction is L-glutamine + H2O = L-glutamate + NH4(+). It catalyses the reaction UTP + NH4(+) + ATP = CTP + ADP + phosphate + 2 H(+). The protein operates within pyrimidine metabolism; CTP biosynthesis via de novo pathway; CTP from UDP: step 2/2. Allosterically activated by GTP, when glutamine is the substrate; GTP has no effect on the reaction when ammonia is the substrate. The allosteric effector GTP functions by stabilizing the protein conformation that binds the tetrahedral intermediate(s) formed during glutamine hydrolysis. Inhibited by the product CTP, via allosteric rather than competitive inhibition. Its function is as follows. Catalyzes the ATP-dependent amination of UTP to CTP with either L-glutamine or ammonia as the source of nitrogen. Regulates intracellular CTP levels through interactions with the four ribonucleotide triphosphates. The polypeptide is CTP synthase (Methylorubrum extorquens (strain CM4 / NCIMB 13688) (Methylobacterium extorquens)).